A 662-amino-acid polypeptide reads, in one-letter code: DNA topoisomerase 4 subunit B (662 aa).

ATP is bound by residues Tyr-20, Asn-60, Asp-87, 129–135, and Lys-359; that span reads GLHGVGI. Residues 439–553 enclose the Toprim domain; sequence TELFIVEGDS…EGHLYLAKPP (115 aa). The Mg(2+) site is built by Glu-445, Asp-518, and Asp-520.

The protein belongs to the type II topoisomerase family. ParE type 1 subfamily. In terms of assembly, heterotetramer composed of ParC and ParE. It depends on Mg(2+) as a cofactor. The cofactor is Mn(2+). Ca(2+) is required as a cofactor.

It catalyses the reaction ATP-dependent breakage, passage and rejoining of double-stranded DNA.. Its function is as follows. Topoisomerase IV is essential for chromosome segregation. It relaxes supercoiled DNA. Performs the decatenation events required during the replication of a circular DNA molecule. The sequence is that of DNA topoisomerase 4 subunit B from Rickettsia felis (strain ATCC VR-1525 / URRWXCal2) (Rickettsia azadi).